We begin with the raw amino-acid sequence, 542 residues long: MATQIPSKPSTSETVPTESLKERINRQMIVILDFGSQYSELIARRIRETNVYSEVLSYRTSAEQLRQLAPKGIILSGGPNSVYDKNAPQCTQEIWDLGIPILGVCYGMQLMVQQLGGKVERAKRAEYGKASLHIDDPTDLLTNVEDNSIAWMSHGDSCIELPDGFKILAHTDNTPCAAIANHEQKLFGVQFHPEVVHSVGGIALIRNFVYHICECEPTWTTEAFVEEAIREIRAKIGDKRVLLALSGGVDSSTLAFLLHRAIGDQLTCMFIDQGFMRKGEPERLMEIFDHQFHIPVVYVNSREQFLEQLKGVTDPEEKRRLIGHEFIKVFEEESNRLGPFDYLAQGTLYPDVIESADSNVDPQTGERVAVKIKSHHNVGGLPKNLRFKLVEPLRKLFKDEVRKVARSIGLPEEIVRRHPFPGPGLAIRIIGEVTSERLKILRDADFVVRDEISKQGMYHDFWQAFAVLLPVRSVGVMGDQRTYAHPVVLRLITSEDGMTADWAKVPYDLLEIISNRIVNEVRGVNRVVYDITSKPPGTIEWE.

Residues 28-218 (MIVILDFGSQ…VYHICECEPT (191 aa)) enclose the Glutamine amidotransferase type-1 domain. The Nucleophile role is filled by C105. Residues H192 and E194 contribute to the active site. Residues 219–417 (WTTEAFVEEA…IGLPEEIVRR (199 aa)) form the GMPS ATP-PPase domain. 246–252 (SGGVDSS) provides a ligand contact to ATP.

Homodimer.

It catalyses the reaction XMP + L-glutamine + ATP + H2O = GMP + L-glutamate + AMP + diphosphate + 2 H(+). It participates in purine metabolism; GMP biosynthesis; GMP from XMP (L-Gln route): step 1/1. In terms of biological role, catalyzes the synthesis of GMP from XMP. The protein is GMP synthase [glutamine-hydrolyzing] of Gloeothece citriformis (strain PCC 7424) (Cyanothece sp. (strain PCC 7424)).